We begin with the raw amino-acid sequence, 582 residues long: Phosphoglucomutase, cytoplasmic (582 aa).

Alpha-D-glucose 1,6-bisphosphate is bound by residues arginine 25 and serine 124. The Phosphoserine intermediate role is filled by serine 124. Mg(2+) contacts are provided by serine 124, aspartate 299, aspartate 301, and aspartate 303. Serine 124 is modified (phosphoserine). 6 residues coordinate alpha-D-glucose 1,6-bisphosphate: aspartate 303, arginine 304, threonine 367, glutamate 386, serine 388, and lysine 399.

The protein belongs to the phosphohexose mutase family. In terms of assembly, monomer. Mg(2+) serves as cofactor.

The protein localises to the cytoplasm. It carries out the reaction alpha-D-glucose 1-phosphate = alpha-D-glucose 6-phosphate. The enzyme catalyses O-phospho-L-seryl-[protein] + alpha-D-glucose 1-phosphate = alpha-D-glucose 1,6-bisphosphate + L-seryl-[protein]. The catalysed reaction is alpha-D-glucose 1,6-bisphosphate + L-seryl-[protein] = O-phospho-L-seryl-[protein] + alpha-D-glucose 6-phosphate. Its function is as follows. Catalyzes the reversible isomerization of alpha-D-glucose 1-phosphate to alpha-D-glucose 6-phosphate. The mechanism proceeds via the intermediate compound alpha-D-glucose 1,6-bisphosphate. This enzyme participates in both the breakdown and synthesis of glucose. The polypeptide is Phosphoglucomutase, cytoplasmic (PGM1) (Populus tremula (European aspen)).